The sequence spans 420 residues: Glucose-1-phosphate adenylyltransferase (420 aa).

Alpha-D-glucose 1-phosphate-binding positions include Tyr-107, Gly-172, 187–188, and Ser-205; that span reads EK.

It belongs to the bacterial/plant glucose-1-phosphate adenylyltransferase family. In terms of assembly, homotetramer.

The enzyme catalyses alpha-D-glucose 1-phosphate + ATP + H(+) = ADP-alpha-D-glucose + diphosphate. It functions in the pathway glycan biosynthesis; glycogen biosynthesis. Involved in the biosynthesis of ADP-glucose, a building block required for the elongation reactions to produce glycogen. Catalyzes the reaction between ATP and alpha-D-glucose 1-phosphate (G1P) to produce pyrophosphate and ADP-Glc. The protein is Glucose-1-phosphate adenylyltransferase of Bradyrhizobium diazoefficiens (strain JCM 10833 / BCRC 13528 / IAM 13628 / NBRC 14792 / USDA 110).